The following is a 180-amino-acid chain: Putative adenylate kinase (180 aa).

The ATP site is built by glycine 10, glycine 12, lysine 13, threonine 14, and threonine 15. The segment at 30-50 (SVKELALSRGIGERVSDEIEI) is NMP. Residues 99-109 (ARGYSKKKLAE) are LID. Residues arginine 100 and lysine 138 each contribute to the ATP site.

This sequence belongs to the adenylate kinase family. AK6 subfamily. Interacts with uS11. Not a structural component of 40S pre-ribosomes, but transiently interacts with them by binding to uS11.

The catalysed reaction is AMP + ATP = 2 ADP. It catalyses the reaction ATP + H2O = ADP + phosphate + H(+). In terms of biological role, broad-specificity nucleoside monophosphate (NMP) kinase that catalyzes the reversible transfer of the terminal phosphate group between nucleoside triphosphates and monophosphates. Also has ATPase activity. Involved in the late maturation steps of the 30S ribosomal particles, specifically 16S rRNA maturation. While NMP activity is not required for ribosome maturation, ATPase activity is. Associates transiently with small ribosomal subunit protein uS11. ATP hydrolysis breaks the interaction with uS11. May temporarily remove uS11 from the ribosome to enable a conformational change of the ribosomal RNA that is needed for the final maturation step of the small ribosomal subunit. The protein is Putative adenylate kinase of Thermococcus onnurineus (strain NA1).